A 716-amino-acid polypeptide reads, in one-letter code: Radial spoke head protein 4 homolog A (716 aa).

Disordered regions lie at residues 1 to 164 (MEDS…CGRR), 375 to 410 (EGED…PKSF), 506 to 526 (GEEE…FEEN), and 697 to 716 (LLAA…DDYD). The segment covering 8–25 (KQEKENQEELGETRRPWE) has biased composition (basic and acidic residues). 3 stretches are compositionally biased toward low complexity: residues 29–42 (AASP…SSEP), 54–66 (QSRS…PQSR), and 80–100 (SSPA…LAPA). Residues 140-156 (HHTSQSEGNTFQQSQQP) show a composition bias toward polar residues. The span at 375 to 389 (EGEDEEEVEEEDVAE) shows a compositional bias: acidic residues. S396 bears the Phosphoserine mark. 2 stretches are compositionally biased toward acidic residues: residues 506–516 (GEEEGEEEEEA) and 701–716 (ENEE…DDYD).

This sequence belongs to the flagellar radial spoke RSP4/6 family. Interacts with RSPH6A. As to expression, expressed in trachea, lungs, and testes. Very strong expression is detected in nasal brushings.

Its subcellular location is the cytoplasm. It is found in the cytoskeleton. The protein resides in the cilium axoneme. The protein localises to the cell projection. It localises to the cilium. Component of the axonemal radial spoke head which plays an important role in ciliary motility. Essential for triplet radial spokes (RS1, RS2 and RS3) head assembly in the motile cilia. This is Radial spoke head protein 4 homolog A (RSPH4A) from Homo sapiens (Human).